Here is a 439-residue protein sequence, read N- to C-terminus: Trigger factor (439 aa).

In terms of domain architecture, PPIase FKBP-type spans 175–260 (SDKLVIDYQN…VKSVYVMKGM (86 aa)).

This sequence belongs to the FKBP-type PPIase family. Tig subfamily.

Its subcellular location is the cytoplasm. It carries out the reaction [protein]-peptidylproline (omega=180) = [protein]-peptidylproline (omega=0). In terms of biological role, involved in protein export. Acts as a chaperone by maintaining the newly synthesized protein in an open conformation. Functions as a peptidyl-prolyl cis-trans isomerase. This Ehrlichia chaffeensis (strain ATCC CRL-10679 / Arkansas) protein is Trigger factor.